The chain runs to 2129 residues: MEMESDNSDDEGSIGNGLDLTGILFGNIDSEGRLLQDDDGEGRGGTGFDAELRENIGSLSKLGLDSMLLEVIDLKEAEPPSDDEEEEDARPSAVSASEGMSAFDALKAGVKREDGAVKAQDDAIDYSDITELSEDCPRTPPEETSTYDDLEDAIPASKVEAKLTKDDKELMPPPSAPMRSGSGGGIEEPAKSNDASSPSDDSKSTDSKDADRKLDTPLADILPSKYQNVDVRELFPDFRPQKVLRFSRLFGPGKPTSLPQIWRHVRKRRRKRNQSRDQKTTNTGGSDSPSDTEEPRKRGFSLHYAAEPTPAECMSDDEDKLLGDFNSEDVRPEGPDNGENSDQKPKVADWRFGPAQIWYDMLEVPDSGEGFNYGFKTKAASTSSQPQLKDERRVKSPEDDVEDPSIADDAFLMVSQLHWEDDVVWDGNDIKAKVLQKLNSKTNAAGWLPSSGSRTAGAFSQPGKPSMPVGSGSSKQGSGASSKKAQQNAQAKPAEAPDDTWYSLFPVENEELIYYKWEDEVIWDAQQVSKVPKPKVLTLDPNDENIILGIPDDIDPSKINKSTGPPPKIKIPHPHVKKSKILLGKAGVINVLAEDTPPPPPKSPDRDPFNISNDTYYTPKTEPTLRLKVGGNLIQHSTPVVELRAPFVPTHMGPMKLRAFHRPPLKKYSHGPMAQSIPHPVFPLLKTIAKKAKQREVERIASGGGDVFFMRNPEDLSGRDGDIVLAEFCEEHPPLINQVGMCSKIKNYYKRKAEKDSGPQDFVYGEVAFAHTSPFLGILHPGQCIQAIENNMYRAPIYPHKMAHNDFLVIRTRNNYWIRSVNSIYTVGQECPLYEVPGPNSKRANNFTRDFLQVFIYRLFWKSRDNPRRIRMDDIKQAFPAHSESSIRKRLKQCADFKRTGMDSNWWVIKPEFRLPSEEEIRAMVSPEQCCAYFSMIAAEQRLKDAGYGEKFLFAPQEDDDEEAQLKLDDEVKVAPWNTTRAYIQAMRGKCLLQLSGPADPTGCGEGFSYVRVPNKPTQTKEEQESQPKRSVTGTDADLRRLPLQRAKELLRQFKVPEEEIKKLSRWEVIDVVRTLSTEKAKAGEEGMDKFSRGNRFSIAEHQERYKEECQRIFDLQNRVLASSEVLSTDEAESSASEESDLEELGKNLENMLSNKKTSTQLSREREELERQELLRQLDEEHGGPSGSGGAKGAKGKDDPGQQMLATNNQGRILRITRTFRGNDGKEYTRVETVRRQPVIDAYIKIRTTKDEQFIKQFATLDEQQKEEMKREKRRIQEQLRRIKRNQERERLAQLAQNQKLQPGGMPTSLGDPKSSGGHSHKERDSGYKEVSPSRKKFKLKPDLKLKCGACGQVGHMRTNKACPLYSGMQSSLSQSNPSLADDFDEQSEKEMTMDDDDLVNVDGTKVTLSSKILKRHGGDDGKRRSGSSSGFTLKVPRDAMGKKKRRVGGDLHCDYLQRHNKTANRRRTDPVVVLSSILEIIHNELRSMPDVSPFLFPVSAKKVPDYYRVVTKPMDLQTMREYIRQRRYTSREMFLEDLKQIVDNSLIYNGPQSAYTLAAQRMFSSCFELLAEREDKLMRLEKAINPLLDDDDQVALSFIFDKLHSQIKQLPESWPFLKPVNKKQVKDYYTVIKRPMDLETIGKNIEAHRYHSRAEYLADIELIATNCEQYNGSDTRYTKFSKKILEYAQTQLIEFSEHCGQLENNIAKTQERARENAPEFDEAWGNDDYNFDRGSRASSPGDDYIDVEGHGGHASSSNSIHRSMGAEAGSSHTAPAVRKPAPPGPGEVKRGRGRPRKQRDPVEEVKSQNPVKRGRGRPRKDSLASNMSHTQAYFLDEDLQCSTDDEDDDEEEDFQEVSEDENNAASILDQGERINAPADAMDGMFDPKNIKTEIDLEAHQMAEEPIGEDDSQQVAEAMVQLSGVGGYYAQQQQDESMDVDPNYDPSDFLAMHKQRQSLGEPSSLQGAFTNFLSHEQDDNGPYNPAEASTSAASGADLGMDASMAMQMAPEMPVNTMNNGMGIDDDLDISESDEEDDGSRVRIKKEVFDDGDYALQHQQMGQAASQSQIYMVDSSNEPTTLDYQQPPQLDFQQVQEMEQLQHQVMPPMQSEQLQQQQTPQGDNDYAWTF.

One can recognise a Protein kinase 1 domain in the interval 1–423 (MEMESDNSDD…VSQLHWEDDV (423 aa)). Disordered stretches follow at residues 77–233 (AEPP…DVRE), 246–348 (FSRL…PKVA), 377–405 (TKAASTSSQPQLKDERRVKSPEDDVEDPS), and 445–497 (AGWL…AEAP). Over residues 79-88 (PPSDDEEEED) the composition is skewed to acidic residues. Composition is skewed to basic and acidic residues over residues 110–121 (VKREDGAVKAQD), 159–170 (VEAKLTKDDKEL), and 200–215 (DDSKSTDSKDADRKLD). Basic residues predominate over residues 263-273 (RHVRKRRRKRN). The segment covering 280–289 (TTNTGGSDSP) has biased composition (polar residues). S286, S288, and S290 each carry phosphoserine. A Phosphoserine; by autocatalysis modification is found at S315. A compositionally biased stretch (basic and acidic residues) spans 388-398 (LKDERRVKSPE). Over residues 470 to 494 (GSGSSKQGSGASSKKAQQNAQAKPA) the composition is skewed to low complexity. S603 carries the phosphoserine modification. Disordered stretches follow at residues 1016 to 1038 (KPTQTKEEQESQPKRSVTGTDAD), 1149 to 1208 (LENM…LATN), 1296 to 1336 (AQNQ…PSRK), 1368 to 1391 (GMQSSLSQSNPSLADDFDEQSEKE), and 1415 to 1435 (KRHGGDDGKRRSGSSSGFTLK). The span at 1019–1028 (QTKEEQESQP) shows a compositional bias: basic and acidic residues. Over residues 1151–1160 (NMLSNKKTST) the composition is skewed to polar residues. Residues 1163–1183 (SREREELERQELLRQLDEEHG) show a composition bias toward basic and acidic residues. The segment covering 1184–1193 (GPSGSGGAKG) has biased composition (gly residues). A compositionally biased stretch (polar residues) spans 1368 to 1379 (GMQSSLSQSNPS). The Nuclear localization signal signature appears at 1442–1448 (GKKKRRV). Bromo domains are found at residues 1466–1574 (RRRT…LAER) and 1588–1696 (LLDD…LIEF). Positions 1515 to 2065 (MDLQTMREYI…QHQQMGQAAS (551 aa)) constitute a Protein kinase 2 domain. Disordered stretches follow at residues 1710–1872 (TQER…LDQG), 1973–1992 (LSHEQDDNGPYNPAEASTSA), 2018–2042 (NNGMGIDDDLDISESDEEDDGSRVR), and 2101–2129 (QHQVMPPMQSEQLQQQQTPQGDNDYAWTF). Residue S1740 is modified to Phosphoserine. A compositionally biased stretch (acidic residues) spans 1836–1863 (LDEDLQCSTDDEDDDEEEDFQEVSEDEN). Residues 2023 to 2037 (IDDDLDISESDEEDD) are compositionally biased toward acidic residues. A compositionally biased stretch (low complexity) spans 2101-2120 (QHQVMPPMQSEQLQQQQTPQ).

It belongs to the TAF1 family. In terms of assembly, belongs to the TFIID complex which is composed of TATA binding protein (Tbp) and a number of TBP-associated factors (Tafs). Taf1 is the largest component of the TFIID complex. Interacts with Tbp, Taf2, Taf4 and Taf6. Mg(2+) is required as a cofactor.

It is found in the nucleus. It catalyses the reaction L-seryl-[protein] + ATP = O-phospho-L-seryl-[protein] + ADP + H(+). The enzyme catalyses L-threonyl-[protein] + ATP = O-phospho-L-threonyl-[protein] + ADP + H(+). With respect to regulation, autophosphorylates on Ser residues. In terms of biological role, TFIID is a multimeric protein complex that plays a central role in mediating promoter responses to various activators and repressors. Largest component and core scaffold of the complex. Contains N- and C-terminal Ser/Thr kinase domains which can autophosphorylate or transphosphorylate other transcription factors. Possesses DNA-binding activity. Essential for progression of the G1 phase of the cell cycle. Negative regulator of the TATA box-binding activity of Tbp. The chain is Transcription initiation factor TFIID subunit 1 (Taf1) from Drosophila melanogaster (Fruit fly).